The chain runs to 813 residues: Leucine--tRNA ligase (813 aa).

Positions 41–51 (PYPSGTLHMGH) match the 'HIGH' region motif. Residues 575–579 (KMSKS) carry the 'KMSKS' region motif. Residue Lys-578 coordinates ATP.

Belongs to the class-I aminoacyl-tRNA synthetase family.

It is found in the cytoplasm. It carries out the reaction tRNA(Leu) + L-leucine + ATP = L-leucyl-tRNA(Leu) + AMP + diphosphate. The sequence is that of Leucine--tRNA ligase from Francisella tularensis subsp. holarctica (strain FTNF002-00 / FTA).